The sequence spans 376 residues: Cysteine proteinase 2 (376 aa).

The signal sequence occupies residues 1–18 (MRLLVFLILLIFVNFSFA). A propeptide spans 19-122 (NVRPNGRRFS…EVLNVEDLQT (104 aa)) (activation peptide). Disulfide bonds link Cys144/Cys187, Cys178/Cys221, and Cys279/Cys365. Cys147 is a catalytic residue. Residues His286 and Asn343 contribute to the active site.

Belongs to the peptidase C1 family.

It is found in the lysosome. In terms of biological role, cysteine proteinases 1 and 2 are believed to participate in the breakdown of protein during differentiation of Dictyostelium as a response to starvation. The sequence is that of Cysteine proteinase 2 (cprB) from Dictyostelium discoideum (Social amoeba).